The chain runs to 253 residues: Hydroxypyruvate/pyruvate aldolase (253 aa).

His-48 (proton acceptor) is an active-site residue. 2 residues coordinate a divalent metal cation: Glu-151 and Asp-177.

It belongs to the HpcH/HpaI aldolase family. It depends on a divalent metal cation as a cofactor.

It carries out the reaction D-glyceraldehyde + pyruvate = 2-dehydro-3-deoxy-L-galactonate. Its function is as follows. Aldolase which can catalyze in vitro the aldolisation reaction between hydroxypyruvate (HPA) or pyruvate (PA) and D-glyceraldehyde (D-GA). The condensation of pyruvate and D-glyceraldehyde produces 2-dehydro-3-deoxy-L-galactonate. Has weak activity with hydroxypyruvate and D-glyceraldehyde. This is Hydroxypyruvate/pyruvate aldolase from Sagittula stellata (strain ATCC 700073 / DSM 11524 / E-37).